A 77-amino-acid polypeptide reads, in one-letter code: RNA-binding protein Hfq (77 aa).

The Sm domain occupies 9-69 (DQFLNQLRKE…ISTFAPQKNV (61 aa)).

The protein belongs to the Hfq family. In terms of assembly, homohexamer.

Its function is as follows. RNA chaperone that binds small regulatory RNA (sRNAs) and mRNAs to facilitate mRNA translational regulation in response to envelope stress, environmental stress and changes in metabolite concentrations. Also binds with high specificity to tRNAs. The polypeptide is RNA-binding protein Hfq (Shouchella clausii (strain KSM-K16) (Alkalihalobacillus clausii)).